Consider the following 192-residue polypeptide: Adenylate kinase (192 aa).

10–15 (GAGKGT) contacts ATP. The interval 30–59 (STGDMLREVIAKETEVGKKAKAIISSGALV) is NMP. Residues threonine 31, arginine 36, 57 to 59 (ALV), 85 to 88 (GYPR), and glutamine 92 contribute to the AMP site. The tract at residues 126–142 (RRVQETVAAGGQVRLDD) is LID. Position 127 (arginine 127) interacts with ATP. 2 residues coordinate AMP: arginine 139 and arginine 150. Isoleucine 178 is an ATP binding site.

The protein belongs to the adenylate kinase family. As to quaternary structure, monomer.

It localises to the cytoplasm. It catalyses the reaction AMP + ATP = 2 ADP. The protein operates within purine metabolism; AMP biosynthesis via salvage pathway; AMP from ADP: step 1/1. Catalyzes the reversible transfer of the terminal phosphate group between ATP and AMP. Plays an important role in cellular energy homeostasis and in adenine nucleotide metabolism. This is Adenylate kinase from Bartonella tribocorum (strain CIP 105476 / IBS 506).